Here is a 283-residue protein sequence, read N- to C-terminus: Phosphatidylglycerol--prolipoprotein diacylglyceryl transferase (283 aa).

Transmembrane regions (helical) follow at residues 17 to 37 (LAVRWYALSYILGFILFTFLG), 56 to 76 (FLTWGILGVILGGRLGYVLFY), 92 to 112 (WEGGMSFHGGFLGVVIAIWLF), and 117 to 137 (GIGFLKLMDTVAPLVPLGLAS). Arginine 139 lines the a 1,2-diacyl-sn-glycero-3-phospho-(1'-sn-glycerol) pocket. 3 helical membrane passes run 194 to 214 (PSQLYQFALEGICLFAVVWLF), 222 to 242 (GQVASLFLGGYGIFRFIAEFA), and 255 to 275 (GLSMGQWLSVPMIVLGIVGFV).

The protein belongs to the Lgt family.

The protein resides in the cell inner membrane. The catalysed reaction is L-cysteinyl-[prolipoprotein] + a 1,2-diacyl-sn-glycero-3-phospho-(1'-sn-glycerol) = an S-1,2-diacyl-sn-glyceryl-L-cysteinyl-[prolipoprotein] + sn-glycerol 1-phosphate + H(+). It participates in protein modification; lipoprotein biosynthesis (diacylglyceryl transfer). Catalyzes the transfer of the diacylglyceryl group from phosphatidylglycerol to the sulfhydryl group of the N-terminal cysteine of a prolipoprotein, the first step in the formation of mature lipoproteins. The protein is Phosphatidylglycerol--prolipoprotein diacylglyceryl transferase of Neisseria meningitidis serogroup C / serotype 2a (strain ATCC 700532 / DSM 15464 / FAM18).